The primary structure comprises 146 residues: MNPAHLLILAAVCVSSLGASSNRPMPLNLYQFKNMIQCTVPSRSWWDFADYGCYCGRGGSGTPVDDLDRCCQVHDNCYNEAEKISGCWPYFKTYSYECSQGTLTCKGGNNACAAAVCDCDRLAAICFAGAPYNNNNYNIDLKARCQ.

A signal peptide spans 1-21 (MNPAHLLILAAVCVSSLGASS). Residues 22–27 (NRPMPL) constitute a propeptide that is removed on maturation. Disulfide bonds link cysteine 38-cysteine 98, cysteine 53-cysteine 145, cysteine 55-cysteine 71, cysteine 70-cysteine 126, cysteine 77-cysteine 119, cysteine 87-cysteine 112, and cysteine 105-cysteine 117. Positions 54, 56, and 58 each coordinate Ca(2+). Histidine 74 is a catalytic residue. Aspartate 75 contributes to the Ca(2+) binding site. Aspartate 120 is an active-site residue.

This sequence belongs to the phospholipase A2 family. Group I subfamily. D49 sub-subfamily. Ca(2+) serves as cofactor. Expressed by the venom gland.

It localises to the secreted. It carries out the reaction a 1,2-diacyl-sn-glycero-3-phosphocholine + H2O = a 1-acyl-sn-glycero-3-phosphocholine + a fatty acid + H(+). Functionally, PLA2 catalyzes the calcium-dependent hydrolysis of the 2-acyl groups in 3-sn-phosphoglycerides. The protein is Acidic phospholipase A2 2 of Naja kaouthia (Monocled cobra).